We begin with the raw amino-acid sequence, 80 residues long: MTITNEQVERINELARKKKAEGLSEAELEEQALLRRAYLDSVKANFRSQVETIKVIDEKTGEDVTPDKLKEIQRKNGMRD.

The protein belongs to the UPF0291 family.

The protein resides in the cytoplasm. The protein is UPF0291 protein llmg_1475 of Lactococcus lactis subsp. cremoris (strain MG1363).